The sequence spans 252 residues: tRNA (guanine-N(1)-)-methyltransferase (252 aa).

S-adenosyl-L-methionine-binding positions include Gly-113 and 133–138 (VGDFVL).

It belongs to the RNA methyltransferase TrmD family. In terms of assembly, homodimer.

It localises to the cytoplasm. The enzyme catalyses guanosine(37) in tRNA + S-adenosyl-L-methionine = N(1)-methylguanosine(37) in tRNA + S-adenosyl-L-homocysteine + H(+). In terms of biological role, specifically methylates guanosine-37 in various tRNAs. This chain is tRNA (guanine-N(1)-)-methyltransferase, found in Francisella tularensis subsp. holarctica (strain FTNF002-00 / FTA).